A 59-amino-acid polypeptide reads, in one-letter code: UPF0434 protein lpl1884 (59 aa).

The protein belongs to the UPF0434 family.

The sequence is that of UPF0434 protein lpl1884 from Legionella pneumophila (strain Lens).